A 530-amino-acid chain; its full sequence is MNLVNKAEKTFALTTPLYYVNDVPHIGSAYTTMAADAVARFQKLLGRDVLLITGTDEHGQKIQRSAESLGKAPQEFCDEIVPSFMSLWRLLNIQYDRFSRTTAVRHKAIVDEFFARVWEAGDIYQGQQKGWYCVSCEEFKEERELLEGNRCPIHVNKEVEWRDEQNYFFRLSKYQTQLEEFYQSHPDFIQPESRRNEVLNFVSQGLQDFSISRVNLDWGFPVPNDPKHTLYVWFDALLAYVTALLDPEDEPTLENALGKWWPINLHLIGKDILRFHAVYWPAMLLSAGLPLPDRVFGHGFLTKDGQKMGKSLGNTVDPVGLVQQYGSDAVRYYFLKEIEFGKDGDFNEVRFIHVLNADLANDLGNLLNRTLNMVKKYCANYALSITNEDIPAENTLKALGVDLGAKVKQAYEVLAFNQACGVVLSLVQASNKFIDDQAPWSLYKQERQQEVETVLYTVLESVRLAAYLLSPVIPNISSNIYQQLGFGINFNEQTDITPFAIHAQWGLLSNKQQLGQPQPIFKRIEQTKNV.

Residues 18–28 (YYVNDVPHIGS) carry the 'HIGH' region motif. Zn(2+)-binding residues include Cys133, Cys136, Cys151, and His154. A 'KMSKS' region motif is present at residues 307-311 (KMGKS). Residue Lys310 coordinates ATP.

This sequence belongs to the class-I aminoacyl-tRNA synthetase family. MetG type 2A subfamily. In terms of assembly, monomer. The cofactor is Zn(2+).

The protein localises to the cytoplasm. The catalysed reaction is tRNA(Met) + L-methionine + ATP = L-methionyl-tRNA(Met) + AMP + diphosphate. Is required not only for elongation of protein synthesis but also for the initiation of all mRNA translation through initiator tRNA(fMet) aminoacylation. This Nostoc sp. (strain PCC 7120 / SAG 25.82 / UTEX 2576) protein is Methionine--tRNA ligase.